Reading from the N-terminus, the 217-residue chain is Variable small protein 22 (217 aa).

An N-terminal signal peptide occupies residues 1–18 (MRKRISAIIMTLFMVFMS). A lipid anchor (N-palmitoyl cysteine) is attached at cysteine 19. Cysteine 19 is lipidated: S-diacylglycerol cysteine. The tract at residues 151–174 (LGKNDASDDDTKKAIKKDNSDKTK) is disordered. The segment covering 155–174 (DASDDDTKKAIKKDNSDKTK) has biased composition (basic and acidic residues).

It belongs to the variable small protein (Vsp) family.

The protein localises to the cell outer membrane. Its function is as follows. The Vlp and Vsp proteins are antigenically distinct proteins, only one vlp or vsp gene is transcriptionally active at any one time. Switching between these genes is a mechanism of host immune response evasion. This chain is Variable small protein 22, found in Borrelia hermsii.